A 552-amino-acid chain; its full sequence is Chaperonin GroEL (552 aa).

Residues 30–33 (TLGP), Lys51, 87–91 (DGTTT), Gly415, 480–482 (NAA), and Asp496 contribute to the ATP site.

It belongs to the chaperonin (HSP60) family. In terms of assembly, forms a cylinder of 14 subunits composed of two heptameric rings stacked back-to-back. Interacts with the co-chaperonin GroES.

The protein resides in the cytoplasm. It catalyses the reaction ATP + H2O + a folded polypeptide = ADP + phosphate + an unfolded polypeptide.. In terms of biological role, together with its co-chaperonin GroES, plays an essential role in assisting protein folding. The GroEL-GroES system forms a nano-cage that allows encapsulation of the non-native substrate proteins and provides a physical environment optimized to promote and accelerate protein folding. This is Chaperonin GroEL from Verminephrobacter eiseniae (strain EF01-2).